The primary structure comprises 388 residues: Succinate--CoA ligase [ADP-forming] subunit beta (388 aa).

The 236-residue stretch at 9 to 244 (KQLFAEYGLP…PSQEDEREAH (236 aa)) folds into the ATP-grasp domain. ATP contacts are provided by residues lysine 46, 53-55 (GRG), glutamate 99, threonine 102, and glutamate 107. The Mg(2+) site is built by asparagine 199 and aspartate 213. Residues asparagine 264 and 321 to 323 (GIV) each bind substrate.

The protein belongs to the succinate/malate CoA ligase beta subunit family. Heterotetramer of two alpha and two beta subunits. The cofactor is Mg(2+).

It carries out the reaction succinate + ATP + CoA = succinyl-CoA + ADP + phosphate. It catalyses the reaction GTP + succinate + CoA = succinyl-CoA + GDP + phosphate. It functions in the pathway carbohydrate metabolism; tricarboxylic acid cycle; succinate from succinyl-CoA (ligase route): step 1/1. In terms of biological role, succinyl-CoA synthetase functions in the citric acid cycle (TCA), coupling the hydrolysis of succinyl-CoA to the synthesis of either ATP or GTP and thus represents the only step of substrate-level phosphorylation in the TCA. The beta subunit provides nucleotide specificity of the enzyme and binds the substrate succinate, while the binding sites for coenzyme A and phosphate are found in the alpha subunit. This chain is Succinate--CoA ligase [ADP-forming] subunit beta, found in Marinomonas sp. (strain MWYL1).